Here is an 82-residue protein sequence, read N- to C-terminus: Large ribosomal subunit protein bL31B (82 aa).

It belongs to the bacterial ribosomal protein bL31 family. Type B subfamily. Part of the 50S ribosomal subunit.

In Bacillus velezensis (strain DSM 23117 / BGSC 10A6 / LMG 26770 / FZB42) (Bacillus amyloliquefaciens subsp. plantarum), this protein is Large ribosomal subunit protein bL31B.